The primary structure comprises 104 residues: Flagellar hook-basal body complex protein FliE (104 aa).

The protein belongs to the FliE family.

It is found in the bacterial flagellum basal body. This chain is Flagellar hook-basal body complex protein FliE, found in Escherichia coli O6:K15:H31 (strain 536 / UPEC).